The primary structure comprises 361 residues: MALTRLLIKDFRNIENADLALAPGFNFLVGPNGSGKTSVLEAIYTLGHGRAFRSLQAGRVIRHDQDAFVLHGRIATAEREISVGLTKNRAGDSKVRIDGSDGHKVAELAQMLPMQLITPEGFTLLNGGPKYRRAYIDWGCFHNEPGFFHAWSNLRRLLKQRNAALRQVSRYQQIRAWDQELAPLAEQISQWRAAYSEAIAADISATCAQFLPEFQLSFSFQRGWDKESHYAELLERNFERDRALTYTASGPHKADFRIRAEGTPVEDLLSRGQLKLLMCALRLAQGEFLTRQNGQRCLYLIDDFASELDETRRHLLAARLKATQAQVFVSAIAAEHVFDMTDEKGKMFHVEQGKIAVQPED.

Residue 30–37 (GPNGSGKT) participates in ATP binding.

The protein belongs to the RecF family.

The protein resides in the cytoplasm. Its function is as follows. The RecF protein is involved in DNA metabolism; it is required for DNA replication and normal SOS inducibility. RecF binds preferentially to single-stranded, linear DNA. It also seems to bind ATP. The polypeptide is DNA replication and repair protein RecF (Erwinia tasmaniensis (strain DSM 17950 / CFBP 7177 / CIP 109463 / NCPPB 4357 / Et1/99)).